Reading from the N-terminus, the 361-residue chain is Phospho-N-acetylmuramoyl-pentapeptide-transferase (361 aa).

Transmembrane regions (helical) follow at residues 25-45 (RAVL…PWVI), 73-93 (TMGG…WADL), 97-117 (YVWL…YDDW), 134-154 (MFWQ…TASL), 168-188 (VIYP…IVGT), 200-220 (GLAA…AYVA), 240-260 (VAVF…FNAY), 264-284 (VFMG…VAVI), 289-309 (IVLF…MIQV), and 338-358 (QVVV…LSTL).

Belongs to the glycosyltransferase 4 family. MraY subfamily. It depends on Mg(2+) as a cofactor.

The protein localises to the cell inner membrane. It carries out the reaction UDP-N-acetyl-alpha-D-muramoyl-L-alanyl-gamma-D-glutamyl-meso-2,6-diaminopimeloyl-D-alanyl-D-alanine + di-trans,octa-cis-undecaprenyl phosphate = di-trans,octa-cis-undecaprenyl diphospho-N-acetyl-alpha-D-muramoyl-L-alanyl-D-glutamyl-meso-2,6-diaminopimeloyl-D-alanyl-D-alanine + UMP. Its pathway is cell wall biogenesis; peptidoglycan biosynthesis. Its function is as follows. Catalyzes the initial step of the lipid cycle reactions in the biosynthesis of the cell wall peptidoglycan: transfers peptidoglycan precursor phospho-MurNAc-pentapeptide from UDP-MurNAc-pentapeptide onto the lipid carrier undecaprenyl phosphate, yielding undecaprenyl-pyrophosphoryl-MurNAc-pentapeptide, known as lipid I. The sequence is that of Phospho-N-acetylmuramoyl-pentapeptide-transferase from Laribacter hongkongensis (strain HLHK9).